Reading from the N-terminus, the 182-residue chain is Protein Syd (182 aa).

It belongs to the Syd family.

Its subcellular location is the cell inner membrane. Its function is as follows. Interacts with the SecY protein in vivo. May bind preferentially to an uncomplexed state of SecY, thus functioning either as a chelating agent for excess SecY in the cell or as a regulatory factor that negatively controls the translocase function. This chain is Protein Syd, found in Aliivibrio salmonicida (strain LFI1238) (Vibrio salmonicida (strain LFI1238)).